We begin with the raw amino-acid sequence, 471 residues long: Heat shock 70 kDa protein 13 (471 aa).

An N-terminal signal peptide occupies residues 1-22 (MAGEMTILGSAVLTLLLAGYLA). The span at 317 to 330 (DSKEPQNGDSELPK) shows a compositional bias: basic and acidic residues. The interval 317–350 (DSKEPQNGDSELPKDQLTPGDGHHVNRVFRPGLS) is disordered.

Belongs to the heat shock protein 70 family. Binds UBQLN2.

Its subcellular location is the microsome. It localises to the endoplasmic reticulum. Functionally, has peptide-independent ATPase activity. This Mus musculus (Mouse) protein is Heat shock 70 kDa protein 13 (Hspa13).